The sequence spans 429 residues: MKERTIQPVNNGLNGNITIPGDKSISHRAVMFGAIAEGKTTIKGFLPGADCLSTISCFKEMGVDIVQNGDEVTVVGKGLEGLQEPKAVLDVGNSGTTIRLMSGILANTPFFSCVQGDASIAKRPMKRVTNPLKQMGANIDGREEGTFTPLTIRGGDLKAIEYTSPVASAQVKSAILLAGLRAEGVTAVTEPHISRDHTERMLEAFGVKVTREGKTVKLAGGQKLTATDVQVPGDVSSAAFFLVAGAIIPNSKLVLQNVGMNPTRTGIIDVLEKMDATFTVEPINEGASEPAANITIETSSLKGIEIGGDIIPRLIDEIPVIALAATQAEGITVIKDAHELKVKETNRIDTVVAELTKLGARIEATDDGMIIYGKSALKGNTVNSYGDHRIGMMLAIAGCLAEGKTTIEDAEAVGVSYPTFFEELQRLTK.

The 3-phosphoshikimate site is built by K23, S24, and R28. K23 serves as a coordination point for phosphoenolpyruvate. Residues G95 and R123 each contribute to the phosphoenolpyruvate site. 3-phosphoshikimate-binding residues include S168, Q170, D316, and K343. Q170 is a phosphoenolpyruvate binding site. Catalysis depends on D316, which acts as the Proton acceptor. Phosphoenolpyruvate-binding residues include R347 and R389.

It belongs to the EPSP synthase family. As to quaternary structure, monomer.

It is found in the cytoplasm. It carries out the reaction 3-phosphoshikimate + phosphoenolpyruvate = 5-O-(1-carboxyvinyl)-3-phosphoshikimate + phosphate. Its pathway is metabolic intermediate biosynthesis; chorismate biosynthesis; chorismate from D-erythrose 4-phosphate and phosphoenolpyruvate: step 6/7. In terms of biological role, catalyzes the transfer of the enolpyruvyl moiety of phosphoenolpyruvate (PEP) to the 5-hydroxyl of shikimate-3-phosphate (S3P) to produce enolpyruvyl shikimate-3-phosphate and inorganic phosphate. This is 3-phosphoshikimate 1-carboxyvinyltransferase from Bacillus cereus (strain AH187).